Consider the following 929-residue polypeptide: Protocadherin gamma-B7 (929 aa).

Positions 1–30 are cleaved as a signal peptide; that stretch reads MGGSCAQRRRAGPRQVLFPLLLPLFYPTLC. Cadherin domains follow at residues 31–133, 134–242, 243–347, 348–452, 453–562, and 570–675; these read EPIR…APQF, QKDE…PPVF, SQDV…SPEI, IITS…APVF, GQSA…APRV, and DGSA…LPDF. Residues 31 to 691 are Extracellular-facing; the sequence is EPIRYSIPEE…SDSQAEMQFY (661 aa). Residues Asn419 and Asn545 are each glycosylated (N-linked (GlcNAc...) asparagine). The chain crosses the membrane as a helical span at residues 692–712; that stretch reads LVVALALISVLFLLAVILAIA. The Cytoplasmic portion of the chain corresponds to 713–929; that stretch reads LRLRQSFSPT…KKKSGKKEKK (217 aa). Disordered stretches follow at residues 806-838 and 899-929; these read QAPP…WPNN and ATLT…KEKK. Over residues 807–838 the composition is skewed to polar residues; it reads APPNTDWRFSQAQRPGTSGSQNGDDTGTWPNN. Positions 919-929 are enriched in basic residues; it reads NKKKSGKKEKK.

It is found in the cell membrane. Functionally, potential calcium-dependent cell-adhesion protein. May be involved in the establishment and maintenance of specific neuronal connections in the brain. The polypeptide is Protocadherin gamma-B7 (PCDHGB7) (Pan troglodytes (Chimpanzee)).